The following is a 232-amino-acid chain: Probable proteasome subunit alpha type-3 (232 aa).

Belongs to the peptidase T1A family. The 26S proteasome consists of a 20S proteasome core and two 19S regulatory subunits. The 20S proteasome core is composed of 28 subunits that are arranged in four stacked rings, resulting in a barrel-shaped structure. The two end rings are each formed by seven alpha subunits, and the two central rings are each formed by seven beta subunits. The catalytic chamber with the active sites is on the inside of the barrel.

The protein resides in the cytoplasm. It is found in the nucleus. Its function is as follows. The proteasome degrades poly-ubiquitinated proteins in the cytoplasm and in the nucleus. It is essential for the regulated turnover of proteins and for the removal of misfolded proteins. The proteasome is a multicatalytic proteinase complex that is characterized by its ability to cleave peptides with Arg, Phe, Tyr, Leu, and Glu adjacent to the leaving group at neutral or slightly basic pH. It has an ATP-dependent proteolytic activity. This chain is Probable proteasome subunit alpha type-3 (PRE9), found in Encephalitozoon cuniculi (strain GB-M1) (Microsporidian parasite).